A 361-amino-acid polypeptide reads, in one-letter code: 5-formaminoimidazole-4-carboxamide-1-(beta)-D-ribofuranosyl 5'-monophosphate synthetase (361 aa).

The 5-amino-1-(5-phospho-beta-D-ribosyl)imidazole-4-carboxamide site is built by H27 and S94. Residues 116–348 (RRILRWESER…MGQRIAREIK (233 aa)) enclose the ATP-grasp domain. ATP is bound by residues 156–166 (KFPGARGGRGY), 199–202 (EEYV), and E230. 5-amino-1-(5-phospho-beta-D-ribosyl)imidazole-4-carboxamide is bound at residue N258. Q297 and E310 together coordinate Mg(2+).

It belongs to the phosphohexose mutase family. In terms of assembly, homohexamer. Dimer of trimers. Mg(2+) is required as a cofactor. Requires Mn(2+) as cofactor.

It carries out the reaction 5-amino-1-(5-phospho-beta-D-ribosyl)imidazole-4-carboxamide + formate + ATP = 5-formamido-1-(5-phospho-D-ribosyl)imidazole-4-carboxamide + ADP + phosphate. It functions in the pathway purine metabolism; IMP biosynthesis via de novo pathway; 5-formamido-1-(5-phospho-D-ribosyl)imidazole-4-carboxamide from 5-amino-1-(5-phospho-D-ribosyl)imidazole-4-carboxamide (formate route): step 1/1. Its activity is regulated as follows. Inhibited by ADP. Catalyzes the ATP- and formate-dependent formylation of 5-aminoimidazole-4-carboxamide-1-beta-d-ribofuranosyl 5'-monophosphate (AICAR) to 5-formaminoimidazole-4-carboxamide-1-beta-d-ribofuranosyl 5'-monophosphate (FAICAR) in the absence of folates. This chain is 5-formaminoimidazole-4-carboxamide-1-(beta)-D-ribofuranosyl 5'-monophosphate synthetase, found in Methanocaldococcus jannaschii (strain ATCC 43067 / DSM 2661 / JAL-1 / JCM 10045 / NBRC 100440) (Methanococcus jannaschii).